The primary structure comprises 406 residues: Multifunctional CCA protein (406 aa).

Residues glycine 8 and arginine 11 each contribute to the ATP site. CTP contacts are provided by glycine 8 and arginine 11. Positions 21 and 23 each coordinate Mg(2+). ATP contacts are provided by arginine 91, arginine 137, and arginine 140. CTP contacts are provided by arginine 91, arginine 137, and arginine 140. The HD domain occupies 225-326 (TGIHTLKVLE…LKLLNRVDAF (102 aa)).

It belongs to the tRNA nucleotidyltransferase/poly(A) polymerase family. Bacterial CCA-adding enzyme type 1 subfamily. As to quaternary structure, monomer. Can also form homodimers and oligomers. The cofactor is Mg(2+). Requires Ni(2+) as cofactor.

It catalyses the reaction a tRNA precursor + 2 CTP + ATP = a tRNA with a 3' CCA end + 3 diphosphate. The catalysed reaction is a tRNA with a 3' CCA end + 2 CTP + ATP = a tRNA with a 3' CCACCA end + 3 diphosphate. Functionally, catalyzes the addition and repair of the essential 3'-terminal CCA sequence in tRNAs without using a nucleic acid template. Adds these three nucleotides in the order of C, C, and A to the tRNA nucleotide-73, using CTP and ATP as substrates and producing inorganic pyrophosphate. tRNA 3'-terminal CCA addition is required both for tRNA processing and repair. Also involved in tRNA surveillance by mediating tandem CCA addition to generate a CCACCA at the 3' terminus of unstable tRNAs. While stable tRNAs receive only 3'-terminal CCA, unstable tRNAs are marked with CCACCA and rapidly degraded. This Nitrosococcus oceani (strain ATCC 19707 / BCRC 17464 / JCM 30415 / NCIMB 11848 / C-107) protein is Multifunctional CCA protein.